We begin with the raw amino-acid sequence, 207 residues long: Inner membrane-spanning protein YciB (207 aa).

6 helical membrane-spanning segments follow: residues 3-23 (FLFDLLPIVLFFVAFKVAEGQ), 51-71 (VLLATLVVIVATFAQIGWLLL), 78-98 (TMLWVSLGLVTVLGGATVWFH), 105-125 (WKPSVLYWVMGTAFWLSHAVF), 150-170 (FMWIAFFAFMGLANLYVAYSF), and 178-198 (FKLFGGVGLMLLFTLAQGLYL).

The protein belongs to the YciB family.

The protein localises to the cell inner membrane. Functionally, plays a role in cell envelope biogenesis, maintenance of cell envelope integrity and membrane homeostasis. This chain is Inner membrane-spanning protein YciB, found in Methylibium petroleiphilum (strain ATCC BAA-1232 / LMG 22953 / PM1).